A 111-amino-acid chain; its full sequence is Flagellar hook-basal body complex protein FliE (111 aa).

It belongs to the FliE family.

It localises to the bacterial flagellum basal body. This chain is Flagellar hook-basal body complex protein FliE, found in Clostridium acetobutylicum (strain ATCC 824 / DSM 792 / JCM 1419 / IAM 19013 / LMG 5710 / NBRC 13948 / NRRL B-527 / VKM B-1787 / 2291 / W).